The chain runs to 316 residues: 1-aminocyclopropane-1-carboxylate oxidase 2 (316 aa).

In terms of domain architecture, Fe2OG dioxygenase spans Pro-153 to Pro-253. Fe cation is bound by residues His-177, Asp-179, and His-234.

The protein belongs to the iron/ascorbate-dependent oxidoreductase family. Fe cation serves as cofactor. Leaves.

The catalysed reaction is 1-aminocyclopropane-1-carboxylate + L-ascorbate + O2 = ethene + L-dehydroascorbate + hydrogen cyanide + CO2 + 2 H2O. Its pathway is alkene biosynthesis; ethylene biosynthesis via S-adenosyl-L-methionine; ethylene from S-adenosyl-L-methionine: step 2/2. This is 1-aminocyclopropane-1-carboxylate oxidase 2 (ACO2) from Solanum lycopersicum (Tomato).